We begin with the raw amino-acid sequence, 320 residues long: Foldase protein PrsA (320 aa).

The signal sequence occupies residues 1-20 (MKMINKLIVPVTASALLLGA). Cys-21 carries N-palmitoyl cysteine lipidation. Cys-21 carries S-diacylglycerol cysteine lipidation. A PpiC domain is found at 139–245 (EDSKKASHIL…FGYHIIKADK (107 aa)). Positions 159–198 (EGLDDKEAKQKAEEIQKEVSKDPSKFGEIAKKESMDTGSA) are disordered.

Belongs to the PrsA family.

It localises to the cell membrane. The enzyme catalyses [protein]-peptidylproline (omega=180) = [protein]-peptidylproline (omega=0). Plays a major role in protein secretion by helping the post-translocational extracellular folding of several secreted proteins. In Staphylococcus aureus (strain Mu3 / ATCC 700698), this protein is Foldase protein PrsA.